A 95-amino-acid chain; its full sequence is uncharacterized protein (95 aa).

Residues 46 to 68 (GDRGTNGRTEAEHDGIPHSRKKV) form a disordered region.

This is an uncharacterized protein from Schizosaccharomyces pombe (strain 972 / ATCC 24843) (Fission yeast).